Here is a 212-residue protein sequence, read N- to C-terminus: Ribosomal RNA small subunit methyltransferase G (212 aa).

S-adenosyl-L-methionine-binding positions include Gly73, 127–128, and Arg143; that span reads IE.

It belongs to the methyltransferase superfamily. RNA methyltransferase RsmG family.

It is found in the cytoplasm. The enzyme catalyses guanosine(527) in 16S rRNA + S-adenosyl-L-methionine = N(7)-methylguanosine(527) in 16S rRNA + S-adenosyl-L-homocysteine. Functionally, specifically methylates the N7 position of guanine in position 527 of 16S rRNA. This is Ribosomal RNA small subunit methyltransferase G from Methylobacterium sp. (strain 4-46).